A 552-amino-acid polypeptide reads, in one-letter code: CTP synthase (552 aa).

Residues 1-265 (MTKFVFVTGG…DRIVCEKLAL (265 aa)) form an amidoligase domain region. Ser13 is a CTP binding site. Ser13 lines the UTP pocket. ATP contacts are provided by residues 14 to 19 (SLGKGI) and Asp71. Mg(2+)-binding residues include Asp71 and Glu139. Residues 146 to 148 (DIE), 186 to 191 (KTKPTQ), and Lys222 contribute to the CTP site. UTP contacts are provided by residues 186-191 (KTKPTQ) and Lys222. The Glutamine amidotransferase type-1 domain occupies 290–545 (TIGMVGKYVD…IKAALAHKQA (256 aa)). An L-glutamine-binding site is contributed by Gly351. Cys378 serves as the catalytic Nucleophile; for glutamine hydrolysis. L-glutamine-binding positions include 379 to 382 (LGMQ), Glu402, and Arg468. Active-site residues include His518 and Glu520.

It belongs to the CTP synthase family. In terms of assembly, homotetramer.

The catalysed reaction is UTP + L-glutamine + ATP + H2O = CTP + L-glutamate + ADP + phosphate + 2 H(+). The enzyme catalyses L-glutamine + H2O = L-glutamate + NH4(+). It catalyses the reaction UTP + NH4(+) + ATP = CTP + ADP + phosphate + 2 H(+). The protein operates within pyrimidine metabolism; CTP biosynthesis via de novo pathway; CTP from UDP: step 2/2. Allosterically activated by GTP, when glutamine is the substrate; GTP has no effect on the reaction when ammonia is the substrate. The allosteric effector GTP functions by stabilizing the protein conformation that binds the tetrahedral intermediate(s) formed during glutamine hydrolysis. Inhibited by the product CTP, via allosteric rather than competitive inhibition. Functionally, catalyzes the ATP-dependent amination of UTP to CTP with either L-glutamine or ammonia as the source of nitrogen. Regulates intracellular CTP levels through interactions with the four ribonucleotide triphosphates. This is CTP synthase from Herminiimonas arsenicoxydans.